A 466-amino-acid polypeptide reads, in one-letter code: Glutamate--tRNA ligase 2 (466 aa).

The short motif at Pro11 to Gly21 is the 'HIGH' region element. The 'KMSKS' region motif lies at Lys239 to Arg243. Residue Lys242 coordinates ATP.

This sequence belongs to the class-I aminoacyl-tRNA synthetase family. Glutamate--tRNA ligase type 1 subfamily. As to quaternary structure, monomer.

Its subcellular location is the cytoplasm. The catalysed reaction is tRNA(Glu) + L-glutamate + ATP = L-glutamyl-tRNA(Glu) + AMP + diphosphate. In terms of biological role, catalyzes the attachment of glutamate to tRNA(Glu) in a two-step reaction: glutamate is first activated by ATP to form Glu-AMP and then transferred to the acceptor end of tRNA(Glu). In Roseobacter denitrificans (strain ATCC 33942 / OCh 114) (Erythrobacter sp. (strain OCh 114)), this protein is Glutamate--tRNA ligase 2.